Consider the following 187-residue polypeptide: MAAEVKKGIDTTKNPIPFEMAQIPGPEMAKTYLPKVIGAIIRKAKRPLLVVGAELFDDPVMFDKMIEMGKMGIPIAATAHSVKGFVDRGYLENVYQIGLHPLTNFLRFPDWKGLDGQGQYDVVIFLGIYYKFANGMLSTLKNFNRDIKRVSIDRYYHVNADMTFGNLAFNPDDYHAAVDEVIAAMKK.

Residue M1 is modified to Blocked amino end (Met).

Belongs to the CdhB family. Heterotetramer of two alpha and two epsilon subunits. The ACDS complex is made up of alpha, epsilon, beta, gamma and delta subunits with a probable stoichiometry of (alpha(2)epsilon(2))(4)-beta(8)-(gamma(1)delta(1))(8).

Its function is as follows. Part of a complex that catalyzes the reversible cleavage of acetyl-CoA, allowing autotrophic growth from CO(2). The alpha-epsilon subcomponent functions as a carbon monoxide dehydrogenase. The precise role of the epsilon subunit is unclear; it may have a stabilizing role within the alpha(2)epsilon(2) component and/or be involved in electron transfer to FAD during a potential FAD-mediated CO oxidation. This Methanothrix soehngenii (Methanosaeta concilii) protein is Acetyl-CoA decarbonylase/synthase complex subunit epsilon.